The chain runs to 487 residues: Chromosomal replication initiator protein DnaA (487 aa).

The interval 1-92 is domain I, interacts with DnaA modulators; the sequence is MTIKGGVVSQ…SELWTANDAT (92 aa). The tract at residues 92–144 is domain II; sequence TGRRLDLKSRLEFESVGGAGYEAKAEPIEIVLPVSSDVPALAPTNGSKPSPVQ. The segment at 145–367 is domain III, AAA+ region; the sequence is GLQERFTFDT…GALNTLSARA (223 aa). ATP-binding residues include Gly-189, Gly-191, Lys-192, and Thr-193. Residues 368–487 form a domain IV, binds dsDNA region; it reads GEGVSRLTLE…LETITRKLRG (120 aa).

It belongs to the DnaA family. As to quaternary structure, oligomerizes as a right-handed, spiral filament on DNA at oriC.

It is found in the cytoplasm. Plays an essential role in the initiation and regulation of chromosomal replication. ATP-DnaA binds to the origin of replication (oriC) to initiate formation of the DNA replication initiation complex once per cell cycle. Binds the DnaA box (a 9 base pair repeat at the origin) and separates the double-stranded (ds)DNA. Forms a right-handed helical filament on oriC DNA; dsDNA binds to the exterior of the filament while single-stranded (ss)DNA is stabiized in the filament's interior. The ATP-DnaA-oriC complex binds and stabilizes one strand of the AT-rich DNA unwinding element (DUE), permitting loading of DNA polymerase. After initiation quickly degrades to an ADP-DnaA complex that is not apt for DNA replication. Binds acidic phospholipids. The chain is Chromosomal replication initiator protein DnaA from Caulobacter sp. (strain K31).